We begin with the raw amino-acid sequence, 818 residues long: Histone H2A deubiquitinase MYSM1 (818 aa).

One can recognise an SANT domain in the interval 107–158 (SSPVKWTKEEKNLFEQGLATFGRRWTSIARLIGSRSVLQVKNYARHYFKNKC). Residues 344–442 (IKPPDQELEI…FGCEQAIYNR (99 aa)) form the SWIRM domain. In terms of domain architecture, MPN spans 548 to 680 (VKVSCEAMLV…PHPQSQVACL (133 aa)). Residues His-627, His-629, and Asp-640 each coordinate Zn(2+). Positions 627–640 (HSHPAFDPNPSIRD) match the JAMM motif motif. The short motif at 745 to 749 (LQKLL) is the LXXLL motif element.

This sequence belongs to the peptidase M67A family. MYSM1 subfamily.

The protein resides in the nucleus. In terms of biological role, metalloprotease that specifically deubiquitinates monoubiquitinated histone H2A, a specific tag for epigenetic transcriptional repression, thereby acting as a coactivator. Preferentially deubiquitinates monoubiquitinated H2A in hyperacetylated nucleosomes. Deubiquitination of histone H2A leads to facilitate the phosphorylation and dissociation of histone H1 from the nucleosome. Acts as a coactivator by participating in the initiation and elongation steps of androgen receptor (AR)-induced gene activation. This is Histone H2A deubiquitinase MYSM1 (mysm1) from Xenopus laevis (African clawed frog).